We begin with the raw amino-acid sequence, 520 residues long: MAAAAAGASGLMAPALAACSSGSGGAAPGSQGVLIGDRLYSGVLITLENCLLPDDKLRFTPSMSSGLDIDTETGLRVVGCELIQAAGILLRLPQVAMATGQVLFQRFFYTKSFVKHSMEHVSMACVHLASKIEEAPRRIRDVINVFHRLRHLREKKKPVPLVLDQEYVNLKNQIIKAERRVLKELGFCVHVKHPHKIIVMYLQVLECERNQHLVQTAWNYMNDSLRTDVFVRFQPESIACACIYLAARTLEIPLPNRPHWFLLFGATEEEIQEICFKILQLYTRKKVDLTHLESEVEKRKHAIEEAKARAKGLLPPGSAPGLDSATAGFSPAPKPESPKEGKGSKSSPLSVKNAKRKMEGPKKAKGDSPVNGLLKGQESRSQSRSREQSYSRSPSRSASPKRRKSDSGSTSGGSKSQSRSRSRSDSPPRQVHRGAPYKGSEVRGSRKSKDCKHLTQKPHKSRSRSSSRSRSRSRERTDSSGKYKKKSHYYRDQRRERSRSYERTGHRYERDHPGHSRHRR.

Cyclin-like stretches follow at residues 81–183 (ELIQ…RVLK) and 196–280 (KIIV…KILQ). The interval 309-520 (RAKGLLPPGS…DHPGHSRHRR (212 aa)) is disordered. A phosphoserine mark is found at S330, S337, S347, and S350. Positions 356–366 (RKMEGPKKAKG) are enriched in basic and acidic residues. Residue S368 is modified to Phosphoserine. The segment at 384–422 (RSREQSYSRSPSRSASPKRRKSDSGSTSGGSKSQSRSRS) is RS. Positions 407–429 (SGSTSGGSKSQSRSRSRSDSPPR) are enriched in low complexity. Positions 440–453 (SEVRGSRKSKDCKH) are enriched in basic and acidic residues. Residues 454-471 (LTQKPHKSRSRSSSRSRS) show a composition bias toward basic residues. Composition is skewed to basic and acidic residues over residues 472-481 (RSRERTDSSG) and 489-514 (YYRD…DHPG).

Belongs to the cyclin family. Cyclin L subfamily. Interacts with CDK11A, CDK11B, CDK12, CDK13 and POLR2A, the hyperphosphorylated C-terminal domain (CTD) of RNA polymerase II. May form a ternary complex with CDK11B and casein kinase II (CKII). Interacts with pre-mRNA-splicing factors, including at least SRSF1, SRSF2 and SRSF7/SLU7.

The protein localises to the nucleus speckle. The protein resides in the nucleus. It localises to the nucleoplasm. In terms of biological role, involved in pre-mRNA splicing. May induce cell death, possibly by acting on the transcription and RNA processing of apoptosis-related factors. The sequence is that of Cyclin-L2 (Ccnl2) from Rattus norvegicus (Rat).